The primary structure comprises 93 residues: Small ribosomal subunit protein bS6 (93 aa).

This sequence belongs to the bacterial ribosomal protein bS6 family.

Binds together with bS18 to 16S ribosomal RNA. This is Small ribosomal subunit protein bS6 (rpsF) from Treponema pallidum (strain Nichols).